The primary structure comprises 1051 residues: Putative helicase/primase complex protein (1051 aa).

Belongs to the asfivirus F1055L family.

In terms of biological role, may be involved in DNA replication. The protein is Putative helicase/primase complex protein of Ornithodoros (relapsing fever ticks).